We begin with the raw amino-acid sequence, 306 residues long: Elongation factor Ts (306 aa).

Residues 80-83 (TDFV) form an involved in Mg(2+) ion dislocation from EF-Tu region.

The protein belongs to the EF-Ts family.

The protein localises to the cytoplasm. Functionally, associates with the EF-Tu.GDP complex and induces the exchange of GDP to GTP. It remains bound to the aminoacyl-tRNA.EF-Tu.GTP complex up to the GTP hydrolysis stage on the ribosome. The chain is Elongation factor Ts from Clostridium acetobutylicum (strain ATCC 824 / DSM 792 / JCM 1419 / IAM 19013 / LMG 5710 / NBRC 13948 / NRRL B-527 / VKM B-1787 / 2291 / W).